Consider the following 173-residue polypeptide: Photosystem I assembly protein Ycf3 (173 aa).

3 TPR repeats span residues 35 to 68 (AYIY…EENA), 72 to 105 (GETL…NPKQ), and 120 to 153 (GRAL…YPGG).

Belongs to the Ycf3 family.

The protein resides in the cellular thylakoid membrane. Its function is as follows. Essential for the assembly of the photosystem I (PSI) complex. May act as a chaperone-like factor to guide the assembly of the PSI subunits. The chain is Photosystem I assembly protein Ycf3 from Prochlorococcus marinus (strain SARG / CCMP1375 / SS120).